Reading from the N-terminus, the 388-residue chain is MNLHEYQAKQLFARYGMPAPTGYACTTPREAEEAASKIGSGPWVVKCQVHAGGRGKAGGVKVVNSKEDIRAFAEAWLGKRLVTYQTDALGQPVHQILVEAATDIDKELYLGAVVDRASRRVVFMASTEGGVEIEKVAEETPELIHKMTIDPLAGPQPYQGRELAFKLGLTGKQVGQFAKIFMGLATLFLERDLAMVEINPLVVTKQGDLICLDGKLGADGNALFRQPELREMRDLSQEDERESRAAQWELNYVALDGNIGCMVNGAGLAMGTMDIVKLHGGEPANFLDVGGGATKERVTEAFKIILSDDKVKAVLVNIFGGIVRCDLIADGIIGAVAEVGVNVPVVVRLEGNNAELGAKKLADSGLNIIAATSLTDAAQQVVAAVGSK.

The 236-residue stretch at 9-244 (KQLFARYGMP…LSQEDERESR (236 aa)) folds into the ATP-grasp domain. ATP is bound by residues K46, 53 to 55 (GRG), E99, T102, and E107. Mg(2+) contacts are provided by N199 and D213. Residues N264 and 321–323 (GIV) each bind substrate.

It belongs to the succinate/malate CoA ligase beta subunit family. In terms of assembly, heterotetramer of two alpha and two beta subunits. Mg(2+) is required as a cofactor.

The enzyme catalyses succinate + ATP + CoA = succinyl-CoA + ADP + phosphate. It carries out the reaction GTP + succinate + CoA = succinyl-CoA + GDP + phosphate. It participates in carbohydrate metabolism; tricarboxylic acid cycle; succinate from succinyl-CoA (ligase route): step 1/1. Functionally, succinyl-CoA synthetase functions in the citric acid cycle (TCA), coupling the hydrolysis of succinyl-CoA to the synthesis of either ATP or GTP and thus represents the only step of substrate-level phosphorylation in the TCA. The beta subunit provides nucleotide specificity of the enzyme and binds the substrate succinate, while the binding sites for coenzyme A and phosphate are found in the alpha subunit. In Serratia proteamaculans (strain 568), this protein is Succinate--CoA ligase [ADP-forming] subunit beta.